The following is a 352-amino-acid chain: Rhodopsin, deep-sea form (352 aa).

At 1–36 the chain is on the extracellular side; it reads MNGTEGPNFYIPMSNITGVVRSPFEYPQYYLAEPWA. 2 N-linked (GlcNAc...) asparagine glycosylation sites follow: Asn2 and Asn15. Residues 37-61 form a helical membrane-spanning segment; it reads YTILAAYMFTLILLGFPVNFLTLYV. At 62–73 the chain is on the cytoplasmic side; the sequence is TIEHKKLRTPLN. A helical transmembrane segment spans residues 74-98; it reads YILLNLAVANLFMVFGGFTTTVYTS. At 99–113 the chain is on the extracellular side; that stretch reads MHGYFVFGETGCNLE. A disulfide bridge links Cys110 with Cys187. Residues 114-133 traverse the membrane as a helical segment; it reads GYFATLGGEISLWSLVVLAI. Topologically, residues 134-152 are cytoplasmic; sequence ERWVVVCKPMSNFRFGENH. A helical membrane pass occupies residues 153-176; sequence AIMGLAFTWIMANSCAMPPLFGWS. Residues 177-202 are Extracellular-facing; the sequence is RYIPEGMQCSCGVDYYTLKPEVNNES. Asn200 is a glycosylation site (N-linked (GlcNAc...) asparagine). The helical transmembrane segment at 203–230 threads the bilayer; that stretch reads FVIYMFIVHFSVPLTIISFCYGRLVCTV. The Cytoplasmic portion of the chain corresponds to 231-252; sequence KEAAAQQQESETTQRAEREVTR. Residues 253 to 276 form a helical membrane-spanning segment; the sequence is MVVIMVIAFLVCWVPYASVAWYIF. Residues 277 to 284 are Extracellular-facing; it reads THQGSTFG. The helical transmembrane segment at 285-309 threads the bilayer; that stretch reads PVFMTVPSFFAKSSAIYNPLIYICL. Position 296 is an N6-(retinylidene)lysine (Lys296). Residues 310-352 are Cytoplasmic-facing; the sequence is NSQFRNCMITTLFCGKNPFQEEEGASTTASKTEASSVSSVSPA. Residue Cys323 is the site of S-palmitoyl cysteine attachment. The tract at residues 333 to 352 is disordered; it reads GASTTASKTEASSVSSVSPA. The segment covering 334-352 has biased composition (low complexity); it reads ASTTASKTEASSVSSVSPA.

Belongs to the G-protein coupled receptor 1 family. Opsin subfamily. In terms of processing, phosphorylated on some or all of the serine and threonine residues present in the C-terminal region. Rod shaped photoreceptor cells which mediates vision in dim light.

The protein localises to the membrane. Its function is as follows. Visual pigments such as rhodopsin and porphyropsin are light-absorbing molecules that mediate vision. Rhodopsin consists of an apoprotein, opsin, covalently linked to 11-cis-retinal. This receptor is coupled to the activation of phospholipase C. Porphyropsin consists of opsin covalently linked to 11-cis 3,4-didehydroretinal. The protein is Rhodopsin, deep-sea form of Anguilla anguilla (European freshwater eel).